Here is a 300-residue protein sequence, read N- to C-terminus: Ribosomal protein L11 methyltransferase (300 aa).

Threonine 152, glycine 173, aspartate 195, and asparagine 234 together coordinate S-adenosyl-L-methionine.

This sequence belongs to the methyltransferase superfamily. PrmA family.

The protein resides in the cytoplasm. It catalyses the reaction L-lysyl-[protein] + 3 S-adenosyl-L-methionine = N(6),N(6),N(6)-trimethyl-L-lysyl-[protein] + 3 S-adenosyl-L-homocysteine + 3 H(+). Its function is as follows. Methylates ribosomal protein L11. The chain is Ribosomal protein L11 methyltransferase from Burkholderia pseudomallei (strain 1710b).